Consider the following 751-residue polypeptide: Polyribonucleotide nucleotidyltransferase (751 aa).

2 residues coordinate Mg(2+): Asp-528 and Asp-534. Residues 594–653 (PRVISVTVPVSKIGEVIGPKGKMINQIQEDTGTDISIEDDGTVYIGATDGPSAEAARSAI) form the KH domain. The region spanning 665–737 (GERYLGTVVK…DRGKLSLAPV (73 aa)) is the S1 motif domain.

This sequence belongs to the polyribonucleotide nucleotidyltransferase family. It depends on Mg(2+) as a cofactor.

Its subcellular location is the cytoplasm. The catalysed reaction is RNA(n+1) + phosphate = RNA(n) + a ribonucleoside 5'-diphosphate. Its function is as follows. Involved in mRNA degradation. Catalyzes the phosphorolysis of single-stranded polyribonucleotides processively in the 3'- to 5'-direction. In Kocuria rhizophila (strain ATCC 9341 / DSM 348 / NBRC 103217 / DC2201), this protein is Polyribonucleotide nucleotidyltransferase.